Reading from the N-terminus, the 1203-residue chain is Potassium/sodium hyperpolarization-activated cyclic nucleotide-gated channel 4 (1203 aa).

The segment at 1–182 (MDKLPPSMRK…QPASASCEQP (182 aa)) is disordered. The Cytoplasmic segment spans residues 1–263 (MDKLPPSMRK…IIHPYSDFRF (263 aa)). Positions 26–36 (MDEEEDAEEEG) are enriched in acidic residues. Gly residues predominate over residues 105–117 (SRGGGSGGTGSGS). Basic and acidic residues predominate over residues 121–133 (HLHDSAEERRLIA). Ser-138 is modified (phosphoserine). Residues 163-174 (ASPPPPQQPPQP) show a composition bias toward pro residues. Residues 209–260 (GQAGFMQRQFGAMLQPGVNKFSLRMFGSQKAVEREQERVKSAGFWIIHPYSD) form an involved in subunit assembly region. The chain crosses the membrane as a helical span at residues 264 to 286 (YWDLTMLLLMVGNLIIIPVGITF). Residues 287-293 (FKDENTT) lie on the Extracellular side of the membrane. A helical transmembrane segment spans residues 294–314 (PWIVFNVVSDTFFLIDLVLNF). Over 315-336 (RTGIVVEDNTEIILDPQRIKMK) the chain is Cytoplasmic. The helical transmembrane segment at 337-359 (YLKSWFMVDFISSIPVDYIFLIV) threads the bilayer. Over 360–378 (ETRIDSEVYKTARALRIVR) the chain is Extracellular. The chain crosses the membrane as a helical; Voltage-sensor span at residues 379–399 (FTKILSLLRLLRLSRLIRYIH). The Cytoplasmic portion of the chain corresponds to 400-413 (QWEEIFHMTYDLAS). A helical membrane pass occupies residues 414–436 (AVVRIVNLIGMMLLLCHWDGCLQ). The Extracellular portion of the chain corresponds to 437–464 (FLVPMLQDFPDDCWVSINNMVNNSWGKQ). The N-linked (GlcNAc...) asparagine glycan is linked to Asn-458. Positions 465-486 (YSYALFKAMSHMLCIGYGRQAP) form an intramembrane region, pore-forming. At 487 to 491 (VGMSD) the chain is on the extracellular side. The chain crosses the membrane as a helical span at residues 492–517 (VWLTMLSMIVGATCYAMFIGHATALI). Residues 518 to 1203 (QSLDSSRRQY…PVRSKLPSNL (686 aa)) are Cytoplasmic-facing. 4 residues coordinate 3',5'-cyclic GMP: Tyr-559, Lys-562, Phe-564, and Glu-566. Residues Gly-659, Glu-660, Cys-662, Arg-669, Thr-670, Val-673, and Arg-710 each contribute to the 3',5'-cyclic AMP site. Disordered regions lie at residues 836 to 856 (ALGSASPASSPSQVDTPSSSS), 870 to 897 (GLSPLLPSSSSSPPPGACGSPSAPTPSA), and 918 to 1203 (LSSS…PSNL). Low complexity-rich tracts occupy residues 918 to 941 (LSSSDSPLLTPLQPGARSPQAAQP) and 966 to 986 (RSPSSSPGQLGQPPGELSLGL). The segment covering 995-1004 (ETPPRQPEPP) has biased composition (pro residues). A compositionally biased stretch (low complexity) spans 1005–1028 (SLVAGASGGASPVGFTPRGGLSPP). Positions 1029–1042 (GHSPGPPRTFPSAP) are enriched in pro residues. Residues 1045–1056 (ASGSHGSLLLPP) show a composition bias toward low complexity. Ser-1105 and Ser-1108 each carry phosphoserine. The segment covering 1122–1137 (AGGGSGGSGSSGGLGP) has biased composition (gly residues).

Belongs to the potassium channel HCN family. In terms of assembly, homotetramer. The channel assemble into homotetramers or heteromeric complexes that contains of four pore-forming subunits. Interacts with PEX5L with a 4:4 HCN4:PEX5L stoichiometry; reduces the effects of cAMP on the voltage-dependence and rate of activation. Interacts with IRAG1; regulates HCN4 channel activity. Interacts with IRAG2; regulates HCN4 channel activity. In terms of processing, S-palmitoylated. Highly expressed in thalamus, testis and in heart, both in ventricle and atrium. Detected at much lower levels in amygdala, substantia nigra, cerebellum and hippocampus.

It localises to the cell membrane. It carries out the reaction K(+)(in) = K(+)(out). It catalyses the reaction Na(+)(in) = Na(+)(out). Its activity is regulated as follows. Activated by cAMP and to a lesser extent by cGMP and cCMP. cAMP binding causes a conformation change that leads to the assembly of an active tetramer and channel opening. Binding of cAMP removes a tonic inhibition conferred by cyclic nucleotide-binding domain (CNBD) on channel opening. Cyclic dinucleotides can modulate HCN4 channel; cyclic dinucleotides acting as potent antagonists of cAMP. Inhibited by extracellular Cs(+) ions. Auxiliary subunits can also regulate HCN4 channel. IRAG1 causes a gain-of-function by shifting HCN4 activation to more depolarized membrane potentials in the absence of cAMP. In contrast, IRAG2 causes a loss-of-function by inhibiting cAMP-dependent potentiation of HCN4 activation. Its function is as follows. Hyperpolarization-activated ion channel that are permeable to Na(+) and K(+) ions with very slow activation and inactivation. Exhibits higher selectivity for K(+) over Na(+) ions. Contributes to the native pacemaker currents in heart (If) that regulate the rhythm of heart beat. Contributes to the native pacemaker currents in neurons (Ih). May mediate responses to sour stimuli. The chain is Potassium/sodium hyperpolarization-activated cyclic nucleotide-gated channel 4 from Homo sapiens (Human).